The sequence spans 535 residues: CTP synthase (535 aa).

The amidoligase domain stretch occupies residues 1–267 (MTKYIFVTGG…DQIVCDHLKL (267 aa)). Residue serine 13 participates in CTP binding. Serine 13 is a binding site for UTP. 14-19 (SLGKGI) is an ATP binding site. Tyrosine 54 contacts L-glutamine. Aspartate 71 is a binding site for ATP. Residues aspartate 71 and glutamate 141 each coordinate Mg(2+). CTP is bound by residues 148-150 (DIE), 188-193 (KTKPTQ), and lysine 224. UTP is bound by residues 188-193 (KTKPTQ) and lysine 224. In terms of domain architecture, Glutamine amidotransferase type-1 spans 292-534 (RIALVGKYVE…VQASITNKES (243 aa)). Glycine 354 contributes to the L-glutamine binding site. The active-site Nucleophile; for glutamine hydrolysis is cysteine 381. L-glutamine is bound by residues 382 to 385 (LGMQ), glutamate 405, and arginine 462. Residues histidine 507 and glutamate 509 contribute to the active site.

This sequence belongs to the CTP synthase family. As to quaternary structure, homotetramer.

It catalyses the reaction UTP + L-glutamine + ATP + H2O = CTP + L-glutamate + ADP + phosphate + 2 H(+). It carries out the reaction L-glutamine + H2O = L-glutamate + NH4(+). The enzyme catalyses UTP + NH4(+) + ATP = CTP + ADP + phosphate + 2 H(+). The protein operates within pyrimidine metabolism; CTP biosynthesis via de novo pathway; CTP from UDP: step 2/2. With respect to regulation, allosterically activated by GTP, when glutamine is the substrate; GTP has no effect on the reaction when ammonia is the substrate. The allosteric effector GTP functions by stabilizing the protein conformation that binds the tetrahedral intermediate(s) formed during glutamine hydrolysis. Inhibited by the product CTP, via allosteric rather than competitive inhibition. Catalyzes the ATP-dependent amination of UTP to CTP with either L-glutamine or ammonia as the source of nitrogen. Regulates intracellular CTP levels through interactions with the four ribonucleotide triphosphates. In Bacillus cytotoxicus (strain DSM 22905 / CIP 110041 / 391-98 / NVH 391-98), this protein is CTP synthase.